The chain runs to 539 residues: Phosphoenolpyruvate carboxykinase (ATP) (539 aa).

Substrate-binding residues include Arg59, Tyr200, and Lys206. ATP contacts are provided by residues Lys206, His225, and 242-250 (GLSGTGKTT). Mn(2+) is bound by residues Lys206 and His225. Residue Asp263 coordinates Mn(2+). ATP is bound by residues Glu291, Arg327, 447 to 448 (RI), and Thr453. Arg327 serves as a coordination point for substrate.

Belongs to the phosphoenolpyruvate carboxykinase (ATP) family. It depends on Mn(2+) as a cofactor.

It is found in the cytoplasm. It carries out the reaction oxaloacetate + ATP = phosphoenolpyruvate + ADP + CO2. The protein operates within carbohydrate biosynthesis; gluconeogenesis. Functionally, involved in the gluconeogenesis. Catalyzes the conversion of oxaloacetate (OAA) to phosphoenolpyruvate (PEP) through direct phosphoryl transfer between the nucleoside triphosphate and OAA. The chain is Phosphoenolpyruvate carboxykinase (ATP) from Selenomonas ruminantium.